Reading from the N-terminus, the 230-residue chain is uncharacterized protein (230 aa).

Transmembrane regions (helical) follow at residues 34-54 (FFAGSLLLATVGALLGLMNFQ), 56-76 (VVQYKWVFFIAEIVAFFGLMF), 87-107 (MLFAFTSLSGVTLVPLLGMVI), 111-131 (GLGAVWQALGMTTIVFGLMSV), 146-166 (MLFIALIVVVVCSLINLFLGS), 167-187 (PMFQVVIAGASAILFSLYIAY), and 205-225 (VSLYLDFLNVFISILQIIGIF).

Belongs to the BI1 family.

Its subcellular location is the cell membrane. This is an uncharacterized protein from Helicobacter pylori (strain J99 / ATCC 700824) (Campylobacter pylori J99).